The primary structure comprises 263 residues: Hydroxyethylthiazole kinase (263 aa).

Met39 is a binding site for substrate. The ATP site is built by Lys115 and Thr160. Gly187 is a binding site for substrate.

Belongs to the Thz kinase family. Mg(2+) is required as a cofactor.

It catalyses the reaction 5-(2-hydroxyethyl)-4-methylthiazole + ATP = 4-methyl-5-(2-phosphooxyethyl)-thiazole + ADP + H(+). It participates in cofactor biosynthesis; thiamine diphosphate biosynthesis; 4-methyl-5-(2-phosphoethyl)-thiazole from 5-(2-hydroxyethyl)-4-methylthiazole: step 1/1. Functionally, catalyzes the phosphorylation of the hydroxyl group of 4-methyl-5-beta-hydroxyethylthiazole (THZ). The chain is Hydroxyethylthiazole kinase from Staphylococcus haemolyticus (strain JCSC1435).